A 193-amino-acid chain; its full sequence is Naphthalene 1,2-dioxygenase system, small oxygenase component (193 aa).

Belongs to the bacterial ring-hydroxylating dioxygenase beta subunit family. In terms of assembly, the naphthalene dioxygenase (NDO) multicomponent enzyme system is composed of an electron transfer component and a dioxygenase component (iron sulfur protein (ISP)). The electron transfer component is composed of a ferredoxin reductase (NdoR) and a ferredoxin (NdoA), and the dioxygenase component is formed of a heterohexamer (trimer of heterodimers) of three large alpha subunits (NdoB) and three small beta subunits (NdoC).

Its pathway is aromatic compound metabolism; naphthalene degradation. Its function is as follows. Component of the naphthalene dioxygenase (NDO) multicomponent enzyme system which catalyzes the incorporation of both atoms of molecular oxygen into naphthalene to form cis-(1R,2S)-dihydroxy-1,2-dihydronaphthalene. The beta subunit seems to have a structural role in the holoenzyme. This is Naphthalene 1,2-dioxygenase system, small oxygenase component from Pseudomonas aeruginosa.